A 247-amino-acid chain; its full sequence is Chymase (247 aa).

A signal peptide spans 1–17; sequence MCLLSLPLLLFLQYTRA. A propeptide spans 18 to 21 (activation peptide); it reads KAGE. The region spanning 22 to 245 is the Peptidase S1 domain; that stretch reads VIGGTECKPH…YRPWINKILK (224 aa). A disulfide bridge connects residues cysteine 51 and cysteine 67. Residue histidine 66 is the Charge relay system of the active site. A glycan (N-linked (GlcNAc...) asparagine) is linked at asparagine 103. Aspartate 110 (charge relay system) is an active-site residue. N-linked (GlcNAc...) asparagine glycosylation occurs at asparagine 121. Intrachain disulfides connect cysteine 144–cysteine 209 and cysteine 175–cysteine 188. Catalysis depends on serine 203, which acts as the Charge relay system.

This sequence belongs to the peptidase S1 family. Granzyme subfamily.

The protein localises to the secreted. It is found in the cytoplasmic granule. The catalysed reaction is Preferential cleavage: Phe-|-Xaa &gt; Tyr-|-Xaa &gt; Trp-|-Xaa &gt; Leu-|-Xaa.. Its function is as follows. Major secreted protease of mast cells with suspected roles in vasoactive peptide generation, extracellular matrix degradation, and regulation of gland secretion. The chain is Chymase from Cavia porcellus (Guinea pig).